Consider the following 187-residue polypeptide: UPF0301 protein plu1183 (187 aa).

The protein belongs to the UPF0301 (AlgH) family.

The chain is UPF0301 protein plu1183 from Photorhabdus laumondii subsp. laumondii (strain DSM 15139 / CIP 105565 / TT01) (Photorhabdus luminescens subsp. laumondii).